We begin with the raw amino-acid sequence, 329 residues long: G-protein coupled receptor 3 (329 aa).

Topologically, residues 1–43 (MMWGAGRSMAWFSAGSGSVNVSIDPAEEPTGPATLLPSPRAWD) are extracellular. Asparagine 20 carries an N-linked (GlcNAc...) asparagine glycan. The chain crosses the membrane as a helical span at residues 44 to 64 (VVLCISGTLVSCENALVVAII). The Cytoplasmic segment spans residues 65–73 (VGTPAFRAP). A helical transmembrane segment spans residues 74-94 (MFLLVGSLAVADLLAGLGLVL). Residues 95–108 (HFAADFCIGSPEMS) lie on the Extracellular side of the membrane. A helical transmembrane segment spans residues 109-129 (LVLVGVLATAFTASIGSLLAI). Topologically, residues 130–153 (TVDRYLSLYNALTYYSETTVTRTY) are cytoplasmic. A helical transmembrane segment spans residues 154–174 (VMLALVWVGALGLGLVPVLAW). Over 175–192 (NCRDGLTTCGVVYPLSKN) the chain is Extracellular. The chain crosses the membrane as a helical span at residues 193 to 213 (HLVVLAIVFFMVFGIMLQLYA). Residues 214 to 247 (QICRIVCRHAQQIALQRHLLPASHYVATRKGIAT) are Cytoplasmic-facing. A helical transmembrane segment spans residues 248-268 (LAVVLGAFAACWLPFTVYCLL). Over 269–277 (GDANSPPLY) the chain is Extracellular. A helical membrane pass occupies residues 278–298 (TYLTLLPATYNSMINPVIYAF). Topologically, residues 299–329 (RNQDVQKVLWAICCCCSTSKIPFRSRSPSDV) are cytoplasmic. A lipid anchor (S-palmitoyl cysteine) is attached at cysteine 312. Phosphoserine occurs at positions 323, 325, and 327.

This sequence belongs to the G-protein coupled receptor 1 family. Abundantly expressed in granule neurons at all development stages. Enriched in the longest tips of neurites during differentiation of hippocampal neurons.

The protein resides in the cell membrane. Functionally, constitutively active G-protein coupled receptor that maintains high 3'-5'-cyclic adenosine monophosphate (cAMP) levels that a plays a role in serveral processes including meiotic arrest in oocytes or neuronal development via activation of numerous intracellular signaling pathways. Acts as an essential activator of thermogenic adipocytes and drives thermogenesis via its intrinsic G(s)-coupling activity without the requirement of a ligand. Has a potential role in modulating a number of brain functions, including behavioral responses to stress, amyloid-beta peptide generation in neurons. Stimulates neurite outgrowth in cerebellar granular neurons modulated via PKA, ERK, and most strongly PI3K-mediated signaling pathways. In Rattus norvegicus (Rat), this protein is G-protein coupled receptor 3 (Gpr3).